We begin with the raw amino-acid sequence, 657 residues long: MSKIIELPDILANQIAAGEVVERPSSVVKELVENAIDAGSSQITIEVEESGLKKIQITDNGEGMTSEDAVLSLRRHATSKIKSQSDLFRIRTLGFRGEALPSIASISLMTIKTATEQGKQGTLLVAKGGNIEKQEVVSSPRGTKILVENLFFNTPARLKYMKSLQSELAHIIDIVNRLSLAHPEVAFTLINDGKEMTKTSGTGDLRQAIAGIYGLNTAKKMIEISNADLDFEISGYVSLPELTRANRNYITLLINGRYIKNFLLNRSILDGYGSKLMVGRFPIAVIDIQIDPYLADVNVHPTKQEVRISKERELMSLISTAISESLKQYDLIPDALENLAKTSTRSVDKPIQTSFSLKQPGLYYDRAKNDFFIGADTVSEPIANFTNLDKSDGSVDNDVKNSVNQGATQSPNIKYASRDQADSENFIHSQDYLSSKQSLNKLVEKLDSEESSTFPELEFFGQMHGTYLFAQGNGGLYIIDQHAAQERVKYEYYREKIGEVDNSLQQLLVPFLFEFSSSDFLQLQEKMSLLQDVGIFLEPYGNNTFILREHPIWMKEEEVESGIYEMCDMLLLTNEVSVKKYRAELAIMMSCKRSIKANHTLDDYSARHLLDQLAQCKNPYNCPHGRPVLVNFTKADMEKMFKRIQENHTSLRDLGKY.

The protein belongs to the DNA mismatch repair MutL/HexB family.

In terms of biological role, this protein is involved in the repair of mismatches in DNA. It is required for dam-dependent methyl-directed DNA mismatch repair. May act as a 'molecular matchmaker', a protein that promotes the formation of a stable complex between two or more DNA-binding proteins in an ATP-dependent manner without itself being part of a final effector complex. The polypeptide is DNA mismatch repair protein MutL (Streptococcus agalactiae serotype III (strain NEM316)).